The primary structure comprises 96 residues: MASSPVSRVVYNGKRSGGPRSPGAGSEIFTPAHEENVRFIYEAWQCVERDLRSQMGSERGLVEEYVEKMPNPSLKAFKPVDLSDLKRRNTQDAKKS.

2 disordered regions span residues 1–28 (MASSPVSRVVYNGKRSGGPRSPGAGSEI) and 76–96 (AFKPVDLSDLKRRNTQDAKKS). A PXDLS motif motif is present at residues 79–83 (PVDLS). Residues 81–96 (DLSDLKRRNTQDAKKS) show a composition bias toward basic and acidic residues.

The protein belongs to the MCRIP family.

It is found in the nucleus. The protein localises to the cytoplasm. The protein resides in the stress granule. May play a role in the regulation of the epithelial-mesenchymal transition. The polypeptide is Mapk-regulated corepressor-interacting protein 1 (MCRIP1) (Gallus gallus (Chicken)).